The sequence spans 83 residues: High-potential iron-sulfur protein (83 aa).

4 residues coordinate [4Fe-4S] cluster: Cys43, Cys46, Cys61, and Cys75.

Belongs to the high-potential iron-sulfur protein (HiPIP) family. Homodimer.

The protein localises to the periplasm. In terms of biological role, specific class of high-redox-potential 4Fe-4S ferredoxins. Functions in anaerobic electron transport in most purple and in some other photosynthetic bacteria and in at least one genus (Paracoccus) of halophilic, denitrifying bacteria. The chain is High-potential iron-sulfur protein from Isochromatium buderi (Chromatium buderi).